The chain runs to 205 residues: 7-methyl-GTP pyrophosphatase (205 aa).

The active-site Proton acceptor is D79.

It belongs to the Maf family. YceF subfamily. It depends on a divalent metal cation as a cofactor.

Its subcellular location is the cytoplasm. The catalysed reaction is N(7)-methyl-GTP + H2O = N(7)-methyl-GMP + diphosphate + H(+). Nucleoside triphosphate pyrophosphatase that hydrolyzes 7-methyl-GTP (m(7)GTP). May have a dual role in cell division arrest and in preventing the incorporation of modified nucleotides into cellular nucleic acids. This chain is 7-methyl-GTP pyrophosphatase, found in Paraburkholderia xenovorans (strain LB400).